Reading from the N-terminus, the 146-residue chain is MTLRLNELAPAEGAKREHRRLGRGIGSGVGKTGGRGIKGQKSRKSGGVRPGFEGGQTAIYRRLPKFGFTSQIALKTAEVRLSELSKVEGDIVSLETLKAANVVRRDQIRARIVLSGEITRAFTVQGVALTKGAKAAIEAAGGKVEE.

The tract at residues 1-54 (MTLRLNELAPAEGAKREHRRLGRGIGSGVGKTGGRGIKGQKSRKSGGVRPGFEG) is disordered. Gly residues predominate over residues 23 to 37 (RGIGSGVGKTGGRGI).

Belongs to the universal ribosomal protein uL15 family. Part of the 50S ribosomal subunit.

Functionally, binds to the 23S rRNA. The chain is Large ribosomal subunit protein uL15 from Acinetobacter baumannii (strain SDF).